Consider the following 132-residue polypeptide: MAMTDPLGDMLTRIRNGAARRKSSVSTPASKLRARVLDVLQAEGYIRGYSEVEFGNGKAELNIELKYYEGASVIREIARVSKPGRRVYVSVKSIPQVANGLGITILSTPKGVMADHQAREQNVGGEVLCSIF.

It belongs to the universal ribosomal protein uS8 family. As to quaternary structure, part of the 30S ribosomal subunit. Contacts proteins S5 and S12.

Functionally, one of the primary rRNA binding proteins, it binds directly to 16S rRNA central domain where it helps coordinate assembly of the platform of the 30S subunit. In Rhizobium meliloti (strain 1021) (Ensifer meliloti), this protein is Small ribosomal subunit protein uS8.